Reading from the N-terminus, the 91-residue chain is Small ribosomal subunit protein bS20 (91 aa).

It belongs to the bacterial ribosomal protein bS20 family.

In terms of biological role, binds directly to 16S ribosomal RNA. The chain is Small ribosomal subunit protein bS20 from Acidithiobacillus ferrooxidans (strain ATCC 23270 / DSM 14882 / CIP 104768 / NCIMB 8455) (Ferrobacillus ferrooxidans (strain ATCC 23270)).